Reading from the N-terminus, the 1217-residue chain is Splicing factor 3B subunit 3 (1217 aa).

Interaction with PHF5A, SF3B1 and SF3B5 regions lie at residues glutamate 105 to glutamine 119 and asparagine 145 to tyrosine 168. Serine 156 is modified (phosphoserine). Interaction with SF3B1 and SF3B5 regions lie at residues aspartate 193 to histidine 231 and arginine 786 to histidine 804. Positions threonine 1028–lysine 1049 are interaction with SF3B1. Residues threonine 1100–serine 1123 are interaction with SF3B5. Threonine 1200 carries the phosphothreonine modification.

The protein belongs to the RSE1 family. Component of the 17S U2 SnRNP complex, a ribonucleoprotein complex that contains small nuclear RNA (snRNA) U2 and a number of specific proteins. Part of the SF3B subcomplex of the 17S U2 SnRNP complex. SF3B associates with the splicing subcomplex SF3A and a 12S RNA unit to form the U2 small nuclear ribonucleoproteins complex (U2 snRNP). Within the SF3B subcomplex, interacts directly with SF3B1 (via HEAT domain), SF3B5 and PHF5A. Identified in the spliceosome A complex; remains associated with the spliceosome throughout the splicing process. Component of the spliceosome B complex. Identified in the spliceosome C complex. Identified in the spliceosome E complex. Component of the minor (U12-type spliceosome) spliceosome. Within this complex, interacts with SCNM1. Associates with the STAGA transcription coactivator-HAT complex. Interacts with SUPT3H. Interacts with TAF3.

It is found in the nucleus. In terms of biological role, component of the 17S U2 SnRNP complex of the spliceosome, a large ribonucleoprotein complex that removes introns from transcribed pre-mRNAs. The 17S U2 SnRNP complex (1) directly participates in early spliceosome assembly and (2) mediates recognition of the intron branch site during pre-mRNA splicing by promoting the selection of the pre-mRNA branch-site adenosine, the nucleophile for the first step of splicing. Within the 17S U2 SnRNP complex, SF3B3 is part of the SF3B subcomplex, which is required for 'A' complex assembly formed by the stable binding of U2 snRNP to the branchpoint sequence in pre-mRNA. Sequence independent binding of SF3A and SF3B subcomplexes upstream of the branch site is essential, it may anchor U2 snRNP to the pre-mRNA. May also be involved in the assembly of the 'E' complex. Also acts as a component of the minor spliceosome, which is involved in the splicing of U12-type introns in pre-mRNAs. In Mus musculus (Mouse), this protein is Splicing factor 3B subunit 3 (Sf3b3).